We begin with the raw amino-acid sequence, 77 residues long: Metallothionein-like protein 2B (77 aa).

This sequence belongs to the metallothionein superfamily. Type 15 family. Expressed in vascular tissues of all organs. Expressed in root and leaf phloem, pollen and root hairs.

Its function is as follows. Metallothioneins have a high content of cysteine residues that bind various heavy metals. Functions as a metal chelator of copper (Cu) and zinc (Zn). Functions cooperatively with the phytochelatin synthase PCS1 to protect plants from Cu and cadmium toxicity. Plays a role in Cu homeostasis, specifically in the remobilization of Cu from senescing leaves. The mobilization of Cu from internal sources is important for seed development. The polypeptide is Metallothionein-like protein 2B (MT2B) (Arabidopsis thaliana (Mouse-ear cress)).